A 175-amino-acid polypeptide reads, in one-letter code: DELTA-stichotoxin-She4b (175 aa).

The segment at 1–10 (ALAGTIIAGA) is plays an important role in the hemolytic activity. The tract at residues 9 to 28 (GASLTFQVLDKVLEELGKVS) is N-terminal region. Phosphocholine contacts are provided by Ser-52, Val-85, Ser-103, Pro-105, Tyr-131, Tyr-135, and Tyr-136. Residues 103 to 118 (SVPFDYNWYSNWWDVK) are trp-rich region, which is important for the binding to lipid membrane. The Cell attachment site, crucial for protein stability signature appears at 141 to 143 (RGD).

Octamer or nonamer in membranes. Monomer in the soluble state. Originally described as forming tetramer in the presence of a lipidic interface. As to expression, expressed in tentacles and mesenteric filaments.

It localises to the secreted. The protein resides in the nematocyst. Its subcellular location is the target cell membrane. Its function is as follows. Pore-forming protein that forms cations-selective hydrophilic pores of around 1 nm and causes cardiac stimulation and cytolysis. Pore formation is a multi-step process that involves specific recognition of membrane sphingomyelin (but neither cholesterol nor phosphatidylcholine) using aromatic rich region and adjacent phosphocholine (POC) binding site, firm binding to the membrane (mainly driven by hydrophobic interactions) accompanied by the transfer of the N-terminal region to the lipid-water interface and finally pore formation after oligomerization of monomers. Cytolytic effects include red blood cells hemolysis, platelet aggregation and lysis, cytotoxic and cytostatic effects on fibroblasts. Lethality in mammals has been ascribed to severe vasospasm of coronary vessels, cardiac arrhythmia, and inotropic effects. The chain is DELTA-stichotoxin-She4b from Stichodactyla helianthus (Sun anemone).